Reading from the N-terminus, the 188-residue chain is Kappa-casein (188 aa).

The signal sequence occupies residues 1 to 21; it reads MMKSSFLIVPILALTLPFLGA. 2 O-linked (GalNAc...) threonine glycosylation sites follow: T143 and T148. The residue at position 163 (T163) is a Phosphothreonine. Phosphoserine; alternate is present on S167. Residue S167 is glycosylated (O-linked (GalNAc...) serine; alternate). T184 carries an O-linked (GalNAc...) threonine glycan. S185 carries the post-translational modification Phosphoserine.

This sequence belongs to the kappa-casein family. In terms of tissue distribution, mammary gland specific. Secreted in milk.

It is found in the secreted. Its function is as follows. Kappa-casein stabilizes micelle formation, preventing casein precipitation in milk. This chain is Kappa-casein (CSN3), found in Sus scrofa (Pig).